A 463-amino-acid polypeptide reads, in one-letter code: Endoglucanase (463 aa).

Residues 1–27 (MVEKRKIFTVLCACGIGFTSYTSCISA) form the signal peptide. The propeptide occupies 28-55 (AAIDNDTLINNGHKINSSIITNSSQVSA). E130 (proton donor) is an active-site residue. D191 (nucleophile) is an active-site residue.

The protein belongs to the glycosyl hydrolase 8 (cellulase D) family. Post-translationally, the N- and the C-terminus may be subjected to proteolysis.

It carries out the reaction Endohydrolysis of (1-&gt;4)-beta-D-glucosidic linkages in cellulose, lichenin and cereal beta-D-glucans.. The sequence is that of Endoglucanase from Bacillus sp. (strain KSM-330).